A 362-amino-acid chain; its full sequence is Dihydroorotate dehydrogenase (quinone) (362 aa).

FMN-binding positions include Ala-62–Lys-66 and Thr-86. Lys-66 provides a ligand contact to substrate. Asn-111–Phe-115 contributes to the substrate binding site. FMN-binding residues include Asn-139 and Asn-170. Position 170 (Asn-170) interacts with substrate. Residue Ser-173 is the Nucleophile of the active site. Residue Asn-175 coordinates substrate. FMN contacts are provided by Lys-215 and Ser-243. Asn-244 to Thr-245 contributes to the substrate binding site. FMN is bound by residues Gly-266, Gly-295, and Tyr-316–Ser-317.

It belongs to the dihydroorotate dehydrogenase family. Type 2 subfamily. Monomer. It depends on FMN as a cofactor.

The protein localises to the cell membrane. The enzyme catalyses (S)-dihydroorotate + a quinone = orotate + a quinol. It participates in pyrimidine metabolism; UMP biosynthesis via de novo pathway; orotate from (S)-dihydroorotate (quinone route): step 1/1. Catalyzes the conversion of dihydroorotate to orotate with quinone as electron acceptor. The protein is Dihydroorotate dehydrogenase (quinone) of Rhizobium leguminosarum bv. trifolii (strain WSM2304).